We begin with the raw amino-acid sequence, 641 residues long: Calpain-6 (641 aa).

The Calpain catalytic domain maps to 26-343 (LFCDPTFLPE…FHKLNVCRNV (318 aa)). Residues 344 to 495 (NNPVFGRKEL…IFSEVPVQLR (152 aa)) form a domain III region. In terms of domain architecture, C2 spans 498-621 (TLDMPKMSCW…YLRKKGGPTA (124 aa)).

Belongs to the peptidase C2 family. Interacts (via domain III) with microtubules. Interacts (via domain II) with ARHGEF2 (via the N-terminal zinc finger).

Its subcellular location is the cytoplasm. The protein localises to the perinuclear region. The protein resides in the cytoskeleton. It localises to the spindle. Microtubule-stabilizing protein that may be involved in the regulation of microtubule dynamics and cytoskeletal organization. May act as a regulator of RAC1 activity through interaction with ARHGEF2 to control lamellipodial formation and cell mobility. Does not seem to have protease activity as it has lost the active site residues. This chain is Calpain-6 (Capn6), found in Rattus norvegicus (Rat).